The sequence spans 690 residues: Calpain-9 (690 aa).

Residues 1-24 (MPYLYRAPGPQAHPVPKDARITHS) form a disordered region. A Calpain catalytic domain is found at 42–337 (LFEDADFPAS…FDKVEICNLT (296 aa)). Positions 81, 83, and 88 each coordinate Ca(2+). C97 is a catalytic residue. Ca(2+) is bound at residue E167. Active-site residues include H254 and N278. 5 residues coordinate Ca(2+): E284, D291, L312, D314, and E316. Residues 338 to 521 (PDALEEDAIH…PPDQETEEEQ (184 aa)) are domain III. The interval 498–519 (GNVDIDLPEPPKPTPPDQETEE) is disordered. 3 consecutive EF-hand domains span residues 518-552 (EEEQ…VLQK), 561-589 (LSLI…FKVF), and 591-626 (DKLK…AGFQ). Positions 522-690 (RFRALFEQVA…NEFIHLTMNI (169 aa)) are domain IV. 10 residues coordinate Ca(2+): D574, S576, N578, K580, E585, D604, D606, S608, T610, and E615.

This sequence belongs to the peptidase C2 family. Expressed predominantly in stomach.

In terms of biological role, calcium-regulated non-lysosomal thiol-protease. The protein is Calpain-9 (CAPN9) of Homo sapiens (Human).